We begin with the raw amino-acid sequence, 316 residues long: Ornithine carbamoyltransferase (316 aa).

Residues 57–60 (STRT), Gln-84, Arg-108, and 135–138 (HPCQ) contribute to the carbamoyl phosphate site. L-ornithine contacts are provided by residues Asn-166, Asp-230, and 234–235 (SM). Residues 269–270 (CL) and Arg-297 contribute to the carbamoyl phosphate site.

This sequence belongs to the aspartate/ornithine carbamoyltransferase superfamily. OTCase family.

Its subcellular location is the cytoplasm. It catalyses the reaction carbamoyl phosphate + L-ornithine = L-citrulline + phosphate + H(+). The protein operates within amino-acid degradation; L-arginine degradation via ADI pathway; carbamoyl phosphate from L-arginine: step 2/2. Functionally, reversibly catalyzes the transfer of the carbamoyl group from carbamoyl phosphate (CP) to the N(epsilon) atom of ornithine (ORN) to produce L-citrulline. The sequence is that of Ornithine carbamoyltransferase from Bacillus anthracis (strain CDC 684 / NRRL 3495).